Here is a 674-residue protein sequence, read N- to C-terminus: Sodium/myo-inositol cotransporter 2 (674 aa).

Residues methionine 1–glutamate 25 are Extracellular-facing. Residues alanine 26–serine 46 traverse the membrane as a helical segment. Over threonine 47 to lysine 56 the chain is Cytoplasmic. The helical transmembrane segment at glycine 57–serine 77 threads the bilayer. Topologically, residues asparagine 78 to glutamate 102 are extracellular. A helical transmembrane segment spans residues leucine 103–glycine 123. Residues glutamine 124–arginine 140 lie on the Cytoplasmic side of the membrane. A helical transmembrane segment spans residues isoleucine 141–aspartate 161. Residues methionine 162–alanine 180 lie on the Extracellular side of the membrane. The helical transmembrane segment at isoleucine 181–isoleucine 201 threads the bilayer. Over tyrosine 202 to threonine 208 the chain is Cytoplasmic. Residues leucine 209–leucine 229 traverse the membrane as a helical segment. The Extracellular portion of the chain corresponds to glutamate 230 to proline 272. Residues glycine 273–valine 293 form a helical membrane-spanning segment. Topologically, residues glutamine 294–glycine 308 are cytoplasmic. Residues serine 309–valine 329 traverse the membrane as a helical segment. The Extracellular segment spans residues serine 330–arginine 374. Residues glycine 375–serine 397 form a helical membrane-spanning segment. Residues threonine 398–methionine 418 lie on the Cytoplasmic side of the membrane. A helical membrane pass occupies residues isoleucine 419–valine 439. The Extracellular portion of the chain corresponds to glutamine 440 to glutamine 446. The chain crosses the membrane as a helical span at residues leucine 447–isoleucine 467. Residues methionine 468–glycine 479 lie on the Cytoplasmic side of the membrane. A helical transmembrane segment spans residues alanine 480–isoleucine 500. Topologically, residues tyrosine 501–tyrosine 521 are extracellular. A helical transmembrane segment spans residues leucine 522–phenylalanine 542. Residues threonine 543 to threonine 653 lie on the Cytoplasmic side of the membrane. Positions glutamate 567–glycine 589 are disordered. Over residues threonine 578–glycine 589 the composition is skewed to polar residues. The chain crosses the membrane as a helical span at residues leucine 654 to alanine 674.

The protein belongs to the sodium:solute symporter (SSF) (TC 2.A.21) family.

It is found in the membrane. Its subcellular location is the apical cell membrane. It carries out the reaction myo-inositol(out) + 2 Na(+)(out) = myo-inositol(in) + 2 Na(+)(in). It catalyses the reaction 1D-chiro-inositol(out) + 2 Na(+)(out) = 1D-chiro-inositol(in) + 2 Na(+)(in). The catalysed reaction is D-glucose(out) + 2 Na(+)(out) = D-glucose(in) + 2 Na(+)(in). The enzyme catalyses D-xylose(out) + 2 Na(+)(out) = D-xylose(in) + 2 Na(+)(in). MI transport activity inhibited by D-chiro-inositol (DCI), phlorizin (Pz) and sodium (Na(+)). Insulin increases D-chiro-inositol uptake. In terms of biological role, involved in the sodium-dependent cotransport of myo-inositol (MI) with a Na(+):MI stoichiometry of 2:1. Exclusively responsible for apical MI transport and absorption in intestine. Can also transport D-chiro-inositol (DCI) but not L-fucose. Exhibits stereospecific cotransport of both D-glucose and D-xylose. May induce apoptosis through the TNF-alpha, PDCD1 pathway. May play a role in the regulation of MI concentration in serum, involving reabsorption in at least the proximal tubule of the kidney. This Bos taurus (Bovine) protein is Sodium/myo-inositol cotransporter 2.